The sequence spans 314 residues: Peroxidase 2 (314 aa).

The N-terminal stretch at 1 to 23 is a signal peptide; it reads MASASSVSLMLLVAAAMASAASA. Q24 bears the Pyrrolidone carboxylic acid mark. Cystine bridges form between C34–C109, C67–C72, C115–C310, and C194–C219. H65 functions as the Proton acceptor in the catalytic mechanism. Ca(2+) is bound by residues D66, V69, G71, D73, and S75. The N-linked (GlcNAc...) asparagine glycan is linked to N148. P157 lines the substrate pocket. The N-linked (GlcNAc...) asparagine glycan is linked to N169. Heme b is bound at residue H187. T188 is a binding site for Ca(2+). The N-linked (GlcNAc...) asparagine glycan is linked to N203. 3 residues coordinate Ca(2+): D234, T237, and D242. N-linked (GlcNAc...) asparagine glycosylation is found at N274 and N309.

The protein belongs to the peroxidase family. Classical plant (class III) peroxidase subfamily. Ca(2+) is required as a cofactor. It depends on heme b as a cofactor.

The protein resides in the secreted. The enzyme catalyses 2 a phenolic donor + H2O2 = 2 a phenolic radical donor + 2 H2O. Removal of H(2)O(2), oxidation of toxic reductants, biosynthesis and degradation of lignin, suberization, auxin catabolism, response to environmental stresses such as wounding, pathogen attack and oxidative stress. These functions might be dependent on each isozyme/isoform in each plant tissue. The chain is Peroxidase 2 (PRX112) from Oryza sativa subsp. japonica (Rice).